A 203-amino-acid polypeptide reads, in one-letter code: MTSAVGTSGTAITSRVHSLNRPNMVSVGTIVWLSSELMFFAGLFAMYFTARAQSGGKWPPPPTELNLYQAVPVTLVLIASSFTCQMGVFAAERGDVFGLRRWYVITFLMGLFFVLGQGYEYYHLMGHGTTIPGSAYGSVFYLATGFHDLHVTGGLVAFIFLLARTAMSKFTPAQATASIVVSYYWHFVDIVWIALFTVIYFIR.

A run of 5 helical transmembrane segments spans residues 30 to 50 (IVWLSSELMFFAGLFAMYFTA), 70 to 90 (AVPVTLVLIASSFTCQMGVFA), 102 to 122 (WYVITFLMGLFFVLGQGYEYY), 142 to 162 (LATGFHDLHVTGGLVAFIFLL), and 179 to 199 (IVVSYYWHFVDIVWIALFTVI).

The protein belongs to the cytochrome c oxidase subunit 3 family.

The protein resides in the cell membrane. The catalysed reaction is 4 Fe(II)-[cytochrome c] + O2 + 8 H(+)(in) = 4 Fe(III)-[cytochrome c] + 2 H2O + 4 H(+)(out). The protein is Probable cytochrome c oxidase subunit 3 (ctaE) of Mycolicibacterium paratuberculosis (strain ATCC BAA-968 / K-10) (Mycobacterium paratuberculosis).